Consider the following 304-residue polypeptide: Oxygen-dependent coproporphyrinogen-III oxidase (304 aa).

Ser-94 contributes to the substrate binding site. A divalent metal cation contacts are provided by His-98 and His-108. His-108 functions as the Proton donor in the catalytic mechanism. Residue 110–112 (NVR) coordinates substrate. A divalent metal cation contacts are provided by His-147 and His-177. The tract at residues 242–277 (YVEFNLVYDRGTLFGLQTGGRTESILMSMPPLVRWE) is important for dimerization. 260-262 (GGR) is a binding site for substrate.

This sequence belongs to the aerobic coproporphyrinogen-III oxidase family. Homodimer. A divalent metal cation serves as cofactor.

It is found in the cytoplasm. It carries out the reaction coproporphyrinogen III + O2 + 2 H(+) = protoporphyrinogen IX + 2 CO2 + 2 H2O. The protein operates within porphyrin-containing compound metabolism; protoporphyrin-IX biosynthesis; protoporphyrinogen-IX from coproporphyrinogen-III (O2 route): step 1/1. Functionally, involved in the heme biosynthesis. Catalyzes the aerobic oxidative decarboxylation of propionate groups of rings A and B of coproporphyrinogen-III to yield the vinyl groups in protoporphyrinogen-IX. In Shewanella pealeana (strain ATCC 700345 / ANG-SQ1), this protein is Oxygen-dependent coproporphyrinogen-III oxidase.